Reading from the N-terminus, the 392-residue chain is Methylthioribose kinase (392 aa).

ATP contacts are provided by residues Asn-38, Lys-53, and 107–109 (EDL). Asp-225 serves as a coordination point for substrate. 242–244 (DPE) lines the ATP pocket. A substrate-binding site is contributed by Arg-332.

This sequence belongs to the methylthioribose kinase family. Homodimer.

The enzyme catalyses 5-(methylsulfanyl)-D-ribose + ATP = 5-(methylsulfanyl)-alpha-D-ribose 1-phosphate + ADP + H(+). It functions in the pathway amino-acid biosynthesis; L-methionine biosynthesis via salvage pathway; S-methyl-5-thio-alpha-D-ribose 1-phosphate from S-methyl-5'-thioadenosine (hydrolase route): step 2/2. Catalyzes the phosphorylation of methylthioribose into methylthioribose-1-phosphate. This is Methylthioribose kinase from Bacillus mycoides (strain KBAB4) (Bacillus weihenstephanensis).